The primary structure comprises 503 residues: MSIKAEEISSLIKQQLEHYDDKLDINEVGVVTYVGDGIARAHGLNNALAGELLKFDNGSYGIAQNLDSSDVGIIILGQFDNIREGDRVQRTGRIMSVPVGDALIGRVVNPLGQPVDGLGEIKSDKTRPIEEKAPGVMDRQSVNQPLQTGIKAIDALVPIGRGQRELIIGDRKTGKTSLAIDTILNQKNQDVICIYVAIGQKESTVRTQVETLKRFGAMDYTIVVEAGPSEPAPMLYIAPYAGTAMGEEFMYNGKDVLIVFDDLSKQAVAYRELSLLLRRPPGREAYPGDVFYLHSRLLERSAKLSDKLGGGSLTALPIIQTEAGDISAYIPTNVISITDGQIFLQSDLFFAGTRPAIDAGNSVSRVGGNAQIKAMKKVAGTLRTDLAAYRELESFAQFGSDLDQATQAKLNRGQRTVEVLKQPLHDPIPVEKQVLILYALTHGYLDSIPVEDISRFQNELFDNFDSSHADLLKTIRETGKLPDDKKLSAAIEEFSESFAPSEK.

Position 169-176 (169-176 (GDRKTGKT)) interacts with ATP.

The protein belongs to the ATPase alpha/beta chains family. In terms of assembly, F-type ATPases have 2 components, CF(1) - the catalytic core - and CF(0) - the membrane proton channel. CF(1) has five subunits: alpha(3), beta(3), gamma(1), delta(1), epsilon(1). CF(0) has three main subunits: a(1), b(2) and c(9-12). The alpha and beta chains form an alternating ring which encloses part of the gamma chain. CF(1) is attached to CF(0) by a central stalk formed by the gamma and epsilon chains, while a peripheral stalk is formed by the delta and b chains.

Its subcellular location is the cell membrane. The enzyme catalyses ATP + H2O + 4 H(+)(in) = ADP + phosphate + 5 H(+)(out). Produces ATP from ADP in the presence of a proton gradient across the membrane. The alpha chain is a regulatory subunit. In Lactobacillus helveticus (strain DPC 4571), this protein is ATP synthase subunit alpha.